We begin with the raw amino-acid sequence, 113 residues long: UPF0122 protein SSU98_0878 (113 aa).

This sequence belongs to the UPF0122 family.

Functionally, might take part in the signal recognition particle (SRP) pathway. This is inferred from the conservation of its genetic proximity to ftsY/ffh. May be a regulatory protein. The protein is UPF0122 protein SSU98_0878 of Streptococcus suis (strain 98HAH33).